Consider the following 1818-residue polypeptide: Unconventional myosin-Vb (1818 aa).

Residues 8-60 enclose the Myosin N-terminal SH3-like domain; it reads TRYTRVWIPDPDEVWRSAELTKDYKEGDKSLQLRLEDDTILEYPVDVQNNQVP. Residues 21 to 40 form a requires for interaction with LIMA1 region; it reads VWRSAELTKDYKEGDKSLQL. Positions 69–762 constitute a Myosin motor domain; sequence VGENDLTALS…QVAYLEKLRA (694 aa). An ATP-binding site is contributed by 163 to 170; it reads GESGAGKT. The interval 641–663 is actin-binding; that stretch reads LNLLMETLNATTPHYVRCIKPND. 6 consecutive IQ domains span residues 765-794, 788-817, 813-842, 836-865, 861-890, and 884-913; these read FREATIMIQKSVRGWLQRVKYRRLRAATLS, LRAATLSLQRFCRGYLARRLAEHLRRTRAA, RTRAAIVFQKQYRMLKARRAYRRVCRATVI, VCRATVIIQSFTRAMFVRRNYRQVLMEHKA, MEHKATIIQKYARGWMARKRFLRERDAAIV, and ERDAAIVIQCAFRRLKARQELKALKIEARS. 2 disordered regions span residues 1086–1120 and 1161–1188; these read LRDEQTPGHRKNPSNQSSLESDSNYPSISTSEIGD and QAQLEKGQQDSKKGQVEQQNNGLDVDQD. The span at 1098–1118 shows a compositional bias: polar residues; it reads PSNQSSLESDSNYPSISTSEI. 2 coiled-coil regions span residues 1140–1261 and 1313–1415; these read MTVF…LILR and LEAQ…ALAQ. Phosphoserine is present on S1416. The region spanning 1496-1773 is the Dilute domain; it reads SSTINGIKKV…IRTIQAQLQE (278 aa).

The protein belongs to the TRAFAC class myosin-kinesin ATPase superfamily. Myosin family. Component of the CART complex, at least composed of ACTN4, HGS/HRS, MYO5B and TRIM3. Interacts with RAB11FIP2. Interacts with RAB11A and RAB8A. Found in a complex with CFTR and RAB11A. Interacts with NPC1L1. Interacts with LIMA1.

It is found in the cytoplasm. In terms of biological role, may be involved in vesicular trafficking via its association with the CART complex. The CART complex is necessary for efficient transferrin receptor recycling but not for EGFR degradation. Required in a complex with RAB11A and RAB11FIP2 for the transport of NPC1L1 to the plasma membrane. Together with RAB11A participates in CFTR trafficking to the plasma membrane and TF (transferrin) recycling in nonpolarized cells. Together with RAB11A and RAB8A participates in epithelial cell polarization. Together with RAB25 regulates transcytosis. Required for proper localization of bile salt export pump ABCB11 at the apical/canalicular plasma membrane of hepatocytes. This Mus musculus (Mouse) protein is Unconventional myosin-Vb (Myo5b).